The following is a 341-amino-acid chain: Anthranilate phosphoribosyltransferase (341 aa).

5-phospho-alpha-D-ribose 1-diphosphate is bound by residues Gly81, 84–85 (GD), 91–94 (NVST), 109–117 (KHGNRSVSS), and Ser121. Gly81 is an anthranilate binding site. Ser93 contributes to the Mg(2+) binding site. Residue Asn112 coordinates anthranilate. Residue Arg167 coordinates anthranilate. Positions 226 and 227 each coordinate Mg(2+).

The protein belongs to the anthranilate phosphoribosyltransferase family. As to quaternary structure, homodimer. The cofactor is Mg(2+).

It carries out the reaction N-(5-phospho-beta-D-ribosyl)anthranilate + diphosphate = 5-phospho-alpha-D-ribose 1-diphosphate + anthranilate. The protein operates within amino-acid biosynthesis; L-tryptophan biosynthesis; L-tryptophan from chorismate: step 2/5. In terms of biological role, catalyzes the transfer of the phosphoribosyl group of 5-phosphorylribose-1-pyrophosphate (PRPP) to anthranilate to yield N-(5'-phosphoribosyl)-anthranilate (PRA). In Teredinibacter turnerae (strain ATCC 39867 / T7901), this protein is Anthranilate phosphoribosyltransferase.